Consider the following 310-residue polypeptide: Ribonuclease HIII (310 aa).

One can recognise an RNase H type-2 domain in the interval 91 to 307 (YNCIGSDEAG…REKAQNLVTK (217 aa)). The a divalent metal cation site is built by aspartate 97, glutamate 98, and aspartate 202.

Belongs to the RNase HII family. RnhC subfamily. Requires Mn(2+) as cofactor. Mg(2+) is required as a cofactor.

Its subcellular location is the cytoplasm. The catalysed reaction is Endonucleolytic cleavage to 5'-phosphomonoester.. Endonuclease that specifically degrades the RNA of RNA-DNA hybrids. This Staphylococcus haemolyticus (strain JCSC1435) protein is Ribonuclease HIII.